Reading from the N-terminus, the 521-residue chain is Apolipoprotein N-acyltransferase (521 aa).

6 helical membrane-spanning segments follow: residues 34 to 54 (LAAPPTGWGVLVWVALVPLLV), 64 to 84 (AFWLGTLAGMVYYAILLRWLL), 100 to 120 (LAIALGAWLFVSASQAWVIGL), 137 to 157 (LFAVGLWVGLHWLWGQGETAF), 176 to 196 (VALGGAQLLVGLAVAVNALVA), and 206 to 226 (YAGLAALLAASVYLYGWWQLA). Residues 240–480 (IQGNIAQARK…YAAFVEPVRL (241 aa)) enclose the CN hydrolase domain. Glutamate 281 functions as the Proton acceptor in the catalytic mechanism. Residue lysine 341 is part of the active site. Cysteine 392 functions as the Nucleophile in the catalytic mechanism. The helical transmembrane segment at 488-508 (ALWGDWFVPLSAALALLGLIA) threads the bilayer.

Belongs to the CN hydrolase family. Apolipoprotein N-acyltransferase subfamily.

Its subcellular location is the cell inner membrane. The catalysed reaction is N-terminal S-1,2-diacyl-sn-glyceryl-L-cysteinyl-[lipoprotein] + a glycerophospholipid = N-acyl-S-1,2-diacyl-sn-glyceryl-L-cysteinyl-[lipoprotein] + a 2-acyl-sn-glycero-3-phospholipid + H(+). It participates in protein modification; lipoprotein biosynthesis (N-acyl transfer). In terms of biological role, catalyzes the phospholipid dependent N-acylation of the N-terminal cysteine of apolipoprotein, the last step in lipoprotein maturation. The polypeptide is Apolipoprotein N-acyltransferase (Gloeobacter violaceus (strain ATCC 29082 / PCC 7421)).